Consider the following 192-residue polypeptide: Early nodulin-like protein 7 (192 aa).

Residues 1–27 (MMMMMMRSTCNLTLMLCICALVVASMA) form the signal peptide. The Phytocyanin domain maps to 32-134 (RDFKVGDEFG…GQRLIVEVMH (103 aa)). Asparagine 48, asparagine 89, and asparagine 101 each carry an N-linked (GlcNAc...) asparagine glycan. Cysteines 88 and 122 form a disulfide. A lipid anchor (GPI-anchor amidated serine) is attached at serine 166. Positions 167–192 (AASSLPTACLLIPLFLTIASFRFISY) are cleaved as a propeptide — removed in mature form.

Belongs to the early nodulin-like (ENODL) family. Mostly expressed in flowers, and, to a lower extent, in seeds, but barely in seedlings, stems, leaves and roots.

It is found in the cell membrane. Functionally, may act as a carbohydrate transporter. This Arabidopsis thaliana (Mouse-ear cress) protein is Early nodulin-like protein 7.